Reading from the N-terminus, the 43-residue chain is Protein PsbN (43 aa).

A helical transmembrane segment spans residues 7 to 27 (LIVAIAAVTICITAFAIYTAF).

The protein belongs to the PsbN family.

The protein resides in the cellular thylakoid membrane. May play a role in photosystem I and II biogenesis. The chain is Protein PsbN from Synechococcus sp. (strain JA-2-3B'a(2-13)) (Cyanobacteria bacterium Yellowstone B-Prime).